The chain runs to 380 residues: Cytochrome b (380 aa).

Helical transmembrane passes span 34-54, 78-99, 114-134, and 179-199; these read FGSLLGLCLMTQILTGLLLAM, WLIRNLHANGASFFFICIYLHI, WNTGVILLLTLMATAFVGYVL, and FFALHFLLPFMIAGLTLIHLT. Positions 84 and 98 each coordinate heme b. Heme b-binding residues include histidine 183 and histidine 197. Position 202 (histidine 202) interacts with a ubiquinone. Transmembrane regions (helical) follow at residues 227 to 247, 289 to 309, 321 to 341, and 348 to 368; these read TKDLLGFLLMIAPLLTLAMFS, LGGVLALAASVLILFLAPFLH, LSQLLFWILVANLLILTWVGS, and FIIIGQIASLTYFTILLILFP.

Belongs to the cytochrome b family. The cytochrome bc1 complex contains 11 subunits: 3 respiratory subunits (MT-CYB, CYC1 and UQCRFS1), 2 core proteins (UQCRC1 and UQCRC2) and 6 low-molecular weight proteins (UQCRH/QCR6, UQCRB/QCR7, UQCRQ/QCR8, UQCR10/QCR9, UQCR11/QCR10 and a cleavage product of UQCRFS1). This cytochrome bc1 complex then forms a dimer. Heme b serves as cofactor.

The protein localises to the mitochondrion inner membrane. Functionally, component of the ubiquinol-cytochrome c reductase complex (complex III or cytochrome b-c1 complex) that is part of the mitochondrial respiratory chain. The b-c1 complex mediates electron transfer from ubiquinol to cytochrome c. Contributes to the generation of a proton gradient across the mitochondrial membrane that is then used for ATP synthesis. The sequence is that of Cytochrome b (MT-CYB) from Amazilia tzacatl (Rufous-tailed hummingbird).